A 631-amino-acid polypeptide reads, in one-letter code: Leucine aminopeptidase 2-2 (631 aa).

Residues 140-142 and 265-270 each bind substrate; these read QCQ and PYGGME. Residue H294 participates in Zn(2+) binding. Residue E295 is the Proton acceptor of the active site. Residues H298 and E317 each coordinate Zn(2+). Y395 functions as the Proton donor in the catalytic mechanism.

Belongs to the peptidase M1 family. The cofactor is Zn(2+).

The protein resides in the cytoplasm. It is found in the nucleus. The catalysed reaction is an epoxide + H2O = an ethanediol. Its function is as follows. Aminopeptidase that preferentially cleaves di- and tripeptides. Also has low epoxide hydrolase activity (in vitro). Can hydrolyze the epoxide leukotriene LTA(4) but it forms preferentially 5,6-dihydroxy-7,9,11,14-eicosatetraenoic acid rather than the cytokine leukotriene B(4) as the product compared to the homologous mammalian enzyme (in vitro). This chain is Leucine aminopeptidase 2-2, found in Meyerozyma guilliermondii (strain ATCC 6260 / CBS 566 / DSM 6381 / JCM 1539 / NBRC 10279 / NRRL Y-324) (Yeast).